Reading from the N-terminus, the 270-residue chain is Glutamate racemase (270 aa).

Residues 10–11 and 42–43 each bind substrate; these read DS and YG. The active-site Proton donor/acceptor is Cys-73. Residue 74–75 coordinates substrate; it reads NT. The active-site Proton donor/acceptor is Cys-184. A substrate-binding site is contributed by 185 to 186; the sequence is TH.

Belongs to the aspartate/glutamate racemases family.

The catalysed reaction is L-glutamate = D-glutamate. The protein operates within cell wall biogenesis; peptidoglycan biosynthesis. Functionally, provides the (R)-glutamate required for cell wall biosynthesis. This is Glutamate racemase from Geobacter metallireducens (strain ATCC 53774 / DSM 7210 / GS-15).